A 181-amino-acid polypeptide reads, in one-letter code: uncharacterized protein (181 aa).

The first 19 residues, 1-19 (MRRLLACSAGVLCFSQLGA), serve as a signal peptide directing secretion.

This is an uncharacterized protein from Treponema pallidum (strain Nichols).